The chain runs to 312 residues: Serine/threonine-protein phosphatase PP2A catalytic subunit (312 aa).

Mn(2+)-binding residues include Asp60, His62, Asp88, and Asn120. Catalysis depends on His121, which acts as the Proton donor. Mn(2+)-binding residues include His170 and His244.

This sequence belongs to the PPP phosphatase family. PP-2A subfamily. Requires Mn(2+) as cofactor.

The protein resides in the cytoplasm. It catalyses the reaction O-phospho-L-seryl-[protein] + H2O = L-seryl-[protein] + phosphate. It carries out the reaction O-phospho-L-threonyl-[protein] + H2O = L-threonyl-[protein] + phosphate. The polypeptide is Serine/threonine-protein phosphatase PP2A catalytic subunit (Nicotiana tabacum (Common tobacco)).